Here is a 676-residue protein sequence, read N- to C-terminus: SPARC-like protein 1 (676 aa).

Positions 1–16 (MKTVLLLICLLGSAFT) are cleaved as a signal peptide. A compositionally biased stretch (basic and acidic residues) spans 35–44 (EKHKYTHSEM). Disordered regions lie at residues 35-151 (EKHK…WALR), 173-369 (NTVG…GVYR), and 385-437 (SEDN…RNST). Positions 95-108 (KNSLRSINFLTLHS) are enriched in polar residues. An N-linked (GlcNAc...) asparagine glycan is attached at Asn182. Positions 184 to 202 (SEEEEAGEEEDEEWGEETD) are enriched in acidic residues. Composition is skewed to basic and acidic residues over residues 249–266 (EKFS…KEGK) and 273–291 (NHNE…KEHF). Residues 312-328 (NAEEDDNDSGDDGEEDL) show a composition bias toward acidic residues. Residue Asn318 is glycosylated (N-linked (GlcNAc...) asparagine). The segment covering 385 to 394 (SEDNHYHHEP) has biased composition (basic and acidic residues). Asn396 carries N-linked (GlcNAc...) asparagine glycosylation. Over residues 397–408 (SSSKQQLQTSSS) the composition is skewed to low complexity. An N-linked (GlcNAc...) asparagine glycan is attached at Asn413. Basic and acidic residues predominate over residues 415–433 (TEHEDEVKTTGGSYHEESA). Asn435 is a glycosylation site (N-linked (GlcNAc...) asparagine). In terms of domain architecture, Follistatin-like spans 444 to 466 (LCRNFHCKRGKVCQADKQGKPSC). Intrachain disulfides connect Cys445/Cys456, Cys450/Cys466, Cys468/Cys502, Cys474/Cys495, Cys484/Cys521, Cys527/Cys638, and Cys646/Cys662. The Kazal-like domain occupies 462-523 (GKPSCICQDP…HLDYMGACKH (62 aa)). An N-linked (GlcNAc...) asparagine glycan is attached at Asn488. One can recognise an EF-hand domain in the interval 634–669 (PMEHCITRFFQECDGDQDKLITLKEWCHCFAIKEED). Asp647, Asp649, Asp651, and Glu658 together coordinate Ca(2+).

This sequence belongs to the SPARC family. In terms of tissue distribution, glial (Mueller) cells of the neuroretina.

It is found in the secreted. It localises to the extracellular space. The protein localises to the extracellular matrix. Its function is as follows. Could play a role in the late stage of neuroretina morphogenesis. The sequence is that of SPARC-like protein 1 (SPARCL1) from Coturnix japonica (Japanese quail).